Reading from the N-terminus, the 529-residue chain is Peptide chain release factor 3 (529 aa).

A tr-type G domain is found at 11–280 (AKRRTFAIIS…GLVKWAPAPM (270 aa)). GTP contacts are provided by residues 20 to 27 (SHPDAGKT), 88 to 92 (DTPGH), and 142 to 145 (NKLD).

This sequence belongs to the TRAFAC class translation factor GTPase superfamily. Classic translation factor GTPase family. PrfC subfamily.

It localises to the cytoplasm. In terms of biological role, increases the formation of ribosomal termination complexes and stimulates activities of RF-1 and RF-2. It binds guanine nucleotides and has strong preference for UGA stop codons. It may interact directly with the ribosome. The stimulation of RF-1 and RF-2 is significantly reduced by GTP and GDP, but not by GMP. The chain is Peptide chain release factor 3 from Photorhabdus laumondii subsp. laumondii (strain DSM 15139 / CIP 105565 / TT01) (Photorhabdus luminescens subsp. laumondii).